The sequence spans 582 residues: Mitogen-activated protein kinase 17 (582 aa).

A disordered region spans residues 22-61 (SSSFHLTTTGDDTVKDLHDPRREDAEGDGWEEVHEGPESD). Over residues 33–45 (DTVKDLHDPRRED) the composition is skewed to basic and acidic residues. A Protein kinase domain is found at 105 to 396 (YKVSEVIGKG…AEEALTDPYF (292 aa)). ATP is bound by residues 111 to 119 (IGKGSYGVV) and K134. Residue D231 is the Proton acceptor of the active site. T267 is modified (phosphothreonine). The short motif at 267–269 (TDY) is the TXY element. Phosphotyrosine is present on Y269. Disordered stretches follow at residues 474–502 (EGVSKGEKSSPQLRQNASLPRERAIGNKH) and 542–582 (ISAS…QLKT). The span at 482 to 491 (SSPQLRQNAS) shows a compositional bias: polar residues. Over residues 493–502 (PRERAIGNKH) the composition is skewed to basic and acidic residues. Residues 557–572 (DQEDSLTESMDETADE) show a composition bias toward acidic residues.

The protein belongs to the protein kinase superfamily. CMGC Ser/Thr protein kinase family. MAP kinase subfamily. Post-translationally, dually phosphorylated on Thr-267 and Tyr-269, which activates the enzyme.

The enzyme catalyses L-seryl-[protein] + ATP = O-phospho-L-seryl-[protein] + ADP + H(+). It catalyses the reaction L-threonyl-[protein] + ATP = O-phospho-L-threonyl-[protein] + ADP + H(+). With respect to regulation, activated by threonine and tyrosine phosphorylation. This is Mitogen-activated protein kinase 17 (MPK17) from Oryza sativa subsp. japonica (Rice).